Here is a 61-residue protein sequence, read N- to C-terminus: Truncated 3-beta hydroxy-5-ene steroid dehydrogenase homolog (61 aa).

Belongs to the 3-beta-HSD family.

This Variola virus (isolate Human/India/Ind3/1967) (VARV) protein is Truncated 3-beta hydroxy-5-ene steroid dehydrogenase homolog.